Consider the following 284-residue polypeptide: UPF0354 protein SERP1303 (284 aa).

It belongs to the UPF0354 family.

This chain is UPF0354 protein SERP1303, found in Staphylococcus epidermidis (strain ATCC 35984 / DSM 28319 / BCRC 17069 / CCUG 31568 / BM 3577 / RP62A).